Reading from the N-terminus, the 273-residue chain is Undecaprenyl-diphosphatase (273 aa).

7 consecutive transmembrane segments (helical) span residues 13–35 (GLVEGFTEFLPISSTGHLIVFGN), 45–62 (VFEITIQLGAVLAVVFEY), 82–102 (FVLNLAIAFIPAAVMGLLFGK), 108–128 (LFNPLSVAVMLVLGGFFILWV), 186–206 (TEFSFFLAVPMMVAATAYDVL), 219–239 (LILIGFVAAFVSGLVAVKALL), and 250–270 (FAYYRIVFGIAIIILWLSGWI).

It belongs to the UppP family.

It is found in the cell inner membrane. It catalyses the reaction di-trans,octa-cis-undecaprenyl diphosphate + H2O = di-trans,octa-cis-undecaprenyl phosphate + phosphate + H(+). Its function is as follows. Catalyzes the dephosphorylation of undecaprenyl diphosphate (UPP). Confers resistance to bacitracin. This Neisseria meningitidis serogroup A / serotype 4A (strain DSM 15465 / Z2491) protein is Undecaprenyl-diphosphatase.